Consider the following 229-residue polypeptide: UPF0488 protein C8orf33 (229 aa).

Over residues 1 to 16 the composition is skewed to low complexity; the sequence is MAALGHLAGEAAAAPG. Residues 1–96 are disordered; that stretch reads MAALGHLAGE…GEKASEKLAP (96 aa). Alanine 2 carries the post-translational modification N-acetylalanine. Omega-N-methylarginine is present on arginine 27. Over residues 69–79 the composition is skewed to basic residues; sequence KKQKNKKKTRN. The residue at position 82 (serine 82) is a Phosphoserine.

Belongs to the UPF0488 family.

In Homo sapiens (Human), this protein is UPF0488 protein C8orf33 (C8orf33).